The primary structure comprises 199 residues: Recombination protein RecR (199 aa).

The C4-type zinc finger occupies 57-72; it reads CRQCRTLTEDELCPQC. A Toprim domain is found at 80–174; that stretch reads SLLCVVQSPV…TISRIAHGVP (95 aa).

This sequence belongs to the RecR family.

Its function is as follows. May play a role in DNA repair. It seems to be involved in an RecBC-independent recombinational process of DNA repair. It may act with RecF and RecO. In Stutzerimonas stutzeri (strain A1501) (Pseudomonas stutzeri), this protein is Recombination protein RecR.